A 357-amino-acid chain; its full sequence is F-box only protein 25 (357 aa).

An interaction with beta-actin region spans residues 1-83 (MPFLGQDWRS…DTAAHSFYRE (83 aa)). In terms of domain architecture, F-box spans 225-273 (LTLSDLPLHMLNNILYRFSDGWDIVTLGQVTPTLYMLSEDRRLWKRLCQ).

As to quaternary structure, part of a SCF (SKP1-cullin-F-box) protein ligase complex consisting of FBXO25, SKP1, CUL1 and RBX1. Interacts directly with SKP1 and CUL1. Interacts (via C-terminus) with beta-actin (via N-terminus). Expressed in all tissues tested, except striated muscle (at protein level). Expressed predominantly in the cerebral cortex, the hippocampus and the Purkinje cell layer of the brain. Intestine and kidney show also significant levels.

The protein localises to the nucleus. Its pathway is protein modification; protein ubiquitination. Functionally, substrate-recognition component of the SCF (SKP1-CUL1-F-box protein)-type E3 ubiquitin ligase complex. May play a role in accumulation of expanded polyglutamine (polyQ) protein huntingtin (HTT). The protein is F-box only protein 25 (Fbxo25) of Mus musculus (Mouse).